The chain runs to 764 residues: FAST kinase domain-containing protein 5, mitochondrial (764 aa).

Position 95 is a phosphoserine (S95). At K507 the chain carries N6-acetyllysine. One can recognise an RAP domain in the interval 697–757; the sequence is LAIQFTNRNQ…RLEKLAFLHE (61 aa).

The protein belongs to the FAST kinase family. As to quaternary structure, found in a complex with GRSF1, DDX28, DHX30 and FASTKD2. Associates with the 12S mitochondrial rRNA (12S mt-rRNA).

It is found in the mitochondrion matrix. The protein resides in the mitochondrion nucleoid. Its function is as follows. Plays an important role in the processing of non-canonical mitochondrial mRNA precursors. In Macaca fascicularis (Crab-eating macaque), this protein is FAST kinase domain-containing protein 5, mitochondrial (FASTKD5).